The primary structure comprises 497 residues: Penton protein (497 aa).

The Cell attachment site motif lies at 293 to 295; the sequence is RGD.

It belongs to the adenoviridae penton family. Interacts (via the cell attachment site RGD) with host heterodimer ITGAV-ITGB5; this interaction promotes virus internalization. Interacts with host WWP1 and WWP2. Interacts with the fiber protein (via N-terminal tail region). Interacts with the capsid vertex protein; this interaction binds the penton base to neighboring peripentonal hexons.

The protein localises to the virion. It is found in the host nucleus. Its function is as follows. Major capsid protein that self-associates to form penton base pentamers, each in the shape of a pentagon, situated at the 12 vertices of the pseudo T=25 capsid. Involved in virus secondary attachment to host cell after initial attachment by the fiber protein. Binds host integrin heterodimer ITGAV-ITGB5 (alphaV-beta5) thereby triggering clathrin-mediated endocytosis of virions. Mediates initial virus attachment to CXADR-negative cells. Binding to integrins ITGAV-ITGB5 also seems to induce macropinocytosis uptake of the virus. As the virus enters the host cell, penton proteins are shed concomitant with virion acidification in the endosome. The sequence is that of Penton protein from Human adenovirus A serotype 12 (HAdV-12).